Consider the following 291-residue polypeptide: ATP phosphoribosyltransferase (291 aa).

It belongs to the ATP phosphoribosyltransferase family. Long subfamily. Mg(2+) is required as a cofactor.

The protein localises to the cytoplasm. It catalyses the reaction 1-(5-phospho-beta-D-ribosyl)-ATP + diphosphate = 5-phospho-alpha-D-ribose 1-diphosphate + ATP. It functions in the pathway amino-acid biosynthesis; L-histidine biosynthesis; L-histidine from 5-phospho-alpha-D-ribose 1-diphosphate: step 1/9. Its activity is regulated as follows. Feedback inhibited by histidine. Functionally, catalyzes the condensation of ATP and 5-phosphoribose 1-diphosphate to form N'-(5'-phosphoribosyl)-ATP (PR-ATP). Has a crucial role in the pathway because the rate of histidine biosynthesis seems to be controlled primarily by regulation of HisG enzymatic activity. The polypeptide is ATP phosphoribosyltransferase (Trichlorobacter lovleyi (strain ATCC BAA-1151 / DSM 17278 / SZ) (Geobacter lovleyi)).